Reading from the N-terminus, the 170-residue chain is MIIERLVGNLRDLNPLDFSVDYVDLEWFETRKKIARFKTRQGKDIAIRLKDAPKLGLSQGDILFKEEKEIIAVNILDSEVIHIQAKSVAEVAKICYEIGNRHAALYYGESQFEFKTPFEKPTLALLEKLGVQNRVLSSKLDSKERLTVSMPHSEPNFKVSLASDFKVVMK.

Belongs to the UreE family.

The protein localises to the cytoplasm. Its function is as follows. Involved in urease metallocenter assembly. Binds nickel. Probably functions as a nickel donor during metallocenter assembly. This chain is Urease accessory protein UreE, found in Helicobacter pylori (strain G27).